The sequence spans 542 residues: MAKMIAFDEEARRGLERGMNQLADAVRVTLGPKGRNVVLEKKWGVPTITNDGVSIAKEIELEDPYEKIGAELVKEVAKKTNDVAGDGTTTATILAQALVREGLRNVAAGANPLGLKKGIEVAVERVSEELSKQAKEVETKEQIASTASISAGDSAIGGLIAEALDKVGKEGVVTVEESNTFGLELELTEGMRFDKGYISPYFVTDADRQEAVLDDPYILIVNSKIAAVKDLLPLLEKVMQTSKPLVIISEDVEGEALATLVVNKIRGTFKSVAVKAPGFGDRRKAILGDIAILTGGQVISEDVGLKLESTSLDLLGRARKIVVTKDETTVVEGSGDPDQIAGRVSQIRNEIDKSDSDYDREKLQERLAKLAGGVAVIKVGAATEVELKEKKHRIEDAVSNAKAAVEEGIVAGGGVALLQASITAFEKLDLSGDEATGARIVALALAAPLRQIASNAGFEGGVVVEKVRDLPVGHGLNAATGEYVDLIATGIIDPVKVTRSALQNAASIAGLFLTVEVVVADRPSAGAAEGGDGAGAMAGMGF.

ATP is bound by residues 29-32, 86-90, glycine 413, 477-479, and aspartate 493; these read TLGP, DGTTT, and NAA.

The protein belongs to the chaperonin (HSP60) family. In terms of assembly, forms a cylinder of 14 subunits composed of two heptameric rings stacked back-to-back. Interacts with the co-chaperonin GroES.

It is found in the cytoplasm. It carries out the reaction ATP + H2O + a folded polypeptide = ADP + phosphate + an unfolded polypeptide.. Its function is as follows. Together with its co-chaperonin GroES, plays an essential role in assisting protein folding. The GroEL-GroES system forms a nano-cage that allows encapsulation of the non-native substrate proteins and provides a physical environment optimized to promote and accelerate protein folding. This is Chaperonin GroEL 2 from Frankia alni (strain DSM 45986 / CECT 9034 / ACN14a).